The sequence spans 462 residues: Stabilizer of axonemal microtubules 1 (462 aa).

Mn stretches follow at residues 30-64, 65-97, 98-131, 132-165, 166-199, 200-232, 233-266, 267-299, 300-332, 333-366, 367-400, and 401-434; these read KPCF…KVNI, PMEG…PIQD, EMDF…QCND, KMEC…PASC, RFDH…LCNI, PLES…PSEV, PFDS…GLDI, PFPS…PPEG, KMDL…KKSD, RFES…FSDE, PMEY…RVNI, and PLEG…IFDE.

The protein belongs to the FAM154 family. Associates with microtubules via the Mn regions.

Its subcellular location is the cytoplasm. It is found in the cytoskeleton. It localises to the microtubule organizing center. The protein localises to the centrosome. The protein resides in the centriole. Its subcellular location is the cilium basal body. It is found in the cilium axoneme. In terms of biological role, may play a role in the regulation of cilium length. Stabilizes microtubules at low temperature. This chain is Stabilizer of axonemal microtubules 1 (Saxo1), found in Rattus norvegicus (Rat).